Here is a 467-residue protein sequence, read N- to C-terminus: 3-isopropylmalate dehydratase large subunit (467 aa).

[4Fe-4S] cluster is bound by residues Cys-347, Cys-407, and Cys-410.

This sequence belongs to the aconitase/IPM isomerase family. LeuC type 1 subfamily. In terms of assembly, heterodimer of LeuC and LeuD. The cofactor is [4Fe-4S] cluster.

It carries out the reaction (2R,3S)-3-isopropylmalate = (2S)-2-isopropylmalate. It functions in the pathway amino-acid biosynthesis; L-leucine biosynthesis; L-leucine from 3-methyl-2-oxobutanoate: step 2/4. Catalyzes the isomerization between 2-isopropylmalate and 3-isopropylmalate, via the formation of 2-isopropylmaleate. The sequence is that of 3-isopropylmalate dehydratase large subunit from Crocosphaera subtropica (strain ATCC 51142 / BH68) (Cyanothece sp. (strain ATCC 51142)).